Here is a 250-residue protein sequence, read N- to C-terminus: Probable transcriptional regulatory protein ckrop_1032 (250 aa).

The tract at residues 1-22 (MSGHSKWATTKHKKAANDAKRG) is disordered.

Belongs to the TACO1 family.

The protein localises to the cytoplasm. The chain is Probable transcriptional regulatory protein ckrop_1032 from Corynebacterium kroppenstedtii (strain DSM 44385 / JCM 11950 / CIP 105744 / CCUG 35717).